The primary structure comprises 62 residues: Large ribosomal subunit protein bL28 (62 aa).

This sequence belongs to the bacterial ribosomal protein bL28 family.

The polypeptide is Large ribosomal subunit protein bL28 (Koribacter versatilis (strain Ellin345)).